A 130-amino-acid chain; its full sequence is Small ribosomal subunit protein uS8 (130 aa).

Belongs to the universal ribosomal protein uS8 family. As to quaternary structure, part of the 30S ribosomal subunit. Contacts proteins S5 and S12.

In terms of biological role, one of the primary rRNA binding proteins, it binds directly to 16S rRNA central domain where it helps coordinate assembly of the platform of the 30S subunit. The polypeptide is Small ribosomal subunit protein uS8 (Tolumonas auensis (strain DSM 9187 / NBRC 110442 / TA 4)).